We begin with the raw amino-acid sequence, 73 residues long: IGMVAECKDGYLVGDDGCKMHCFTRPGHYCASECSRVKGKDGYCYAWLACYCYNMPNWAPIWNSATNSCGKGK.

Positions 1 to 7 (IGMVAEC) are cleaved as a signal peptide. The LCN-type CS-alpha/beta domain maps to 8 to 70 (KDGYLVGDDG…IWNSATNSCG (63 aa)). 4 disulfide bridges follow: Cys18-Cys69, Cys22-Cys44, Cys30-Cys50, and Cys34-Cys52. Lys71 is subject to Lysine amide.

This sequence belongs to the long (4 C-C) scorpion toxin superfamily. Sodium channel inhibitor family. Beta subfamily. As to expression, expressed by the venom gland.

The protein resides in the secreted. Beta toxins bind voltage-independently at site-4 of sodium channels (Nav) and shift the voltage of activation toward more negative potentials thereby affecting sodium channel activation and promoting spontaneous and repetitive firing. In Tityus discrepans (Venezuelan scorpion), this protein is Toxin Td9.